Consider the following 372-residue polypeptide: Aminomethyltransferase (372 aa).

Belongs to the GcvT family. In terms of assembly, the glycine cleavage system is composed of four proteins: P, T, L and H.

The catalysed reaction is N(6)-[(R)-S(8)-aminomethyldihydrolipoyl]-L-lysyl-[protein] + (6S)-5,6,7,8-tetrahydrofolate = N(6)-[(R)-dihydrolipoyl]-L-lysyl-[protein] + (6R)-5,10-methylene-5,6,7,8-tetrahydrofolate + NH4(+). The glycine cleavage system catalyzes the degradation of glycine. The chain is Aminomethyltransferase from Synechococcus elongatus (strain ATCC 33912 / PCC 7942 / FACHB-805) (Anacystis nidulans R2).